A 78-amino-acid chain; its full sequence is Acyl carrier protein (78 aa).

The region spanning 2–77 is the Carrier domain; the sequence is STIEERVKKI…AAIDYVNAHQ (76 aa). Ser-37 carries the post-translational modification O-(pantetheine 4'-phosphoryl)serine.

The protein belongs to the acyl carrier protein (ACP) family. 4'-phosphopantetheine is transferred from CoA to a specific serine of apo-ACP by AcpS. This modification is essential for activity because fatty acids are bound in thioester linkage to the sulfhydryl of the prosthetic group.

Its subcellular location is the cytoplasm. It participates in lipid metabolism; fatty acid biosynthesis. Its function is as follows. Carrier of the growing fatty acid chain in fatty acid biosynthesis. This chain is Acyl carrier protein, found in Pseudomonas entomophila (strain L48).